Reading from the N-terminus, the 234-residue chain is MAYKRVLLKLSGEALMGEKPYGIDPAIVQSIAEDVSKVVENNVQLAIVVGGGNIFRGLKGSADGMDRATADYVGMLATVMNAISLQDGLERVGVATRVQTAIEMQEIAEPYIRRRAMRHLEKGRVVVFGGGCGNPFFTTDTTAALRAAEINAEVVMKATKVDGVYNCDPNKFKDAKKYSSLSYQQVLSDEIAVMDSTAIALCKDNNIPIMVFDIFKKGNISKAVDGDPIGSLIS.

Residue 9–12 (KLSG) participates in ATP binding. Glycine 51 is a binding site for UMP. ATP-binding residues include glycine 52 and arginine 56. Residues aspartate 71 and 132 to 139 (CGNPFFTT) each bind UMP. Residues threonine 159, tyrosine 165, and aspartate 168 each coordinate ATP.

The protein belongs to the UMP kinase family. In terms of assembly, homohexamer.

The protein localises to the cytoplasm. The enzyme catalyses UMP + ATP = UDP + ADP. Its pathway is pyrimidine metabolism; CTP biosynthesis via de novo pathway; UDP from UMP (UMPK route): step 1/1. Inhibited by UTP. Its function is as follows. Catalyzes the reversible phosphorylation of UMP to UDP. The sequence is that of Uridylate kinase from Prochlorococcus marinus (strain MIT 9301).